A 283-amino-acid chain; its full sequence is RNase adapter protein RapZ (283 aa).

An ATP-binding site is contributed by 8 to 15; it reads GRSGSGKS. 56 to 59 lines the GTP pocket; that stretch reads DVRN. The interval 266–283 is RNA-binding; it reads RSRGKNVQSRHRTLEKRK.

The protein belongs to the RapZ-like family. RapZ subfamily. As to quaternary structure, homotrimer.

Its function is as follows. Modulates the synthesis of GlmS, by affecting the processing and stability of the regulatory small RNA GlmZ. When glucosamine-6-phosphate (GlcN6P) concentrations are high in the cell, RapZ binds GlmZ and targets it to cleavage by RNase E. Consequently, GlmZ is inactivated and unable to activate GlmS synthesis. Under low GlcN6P concentrations, RapZ is sequestered and inactivated by an other regulatory small RNA, GlmY, preventing GlmZ degradation and leading to synthesis of GlmS. This is RNase adapter protein RapZ from Photorhabdus laumondii subsp. laumondii (strain DSM 15139 / CIP 105565 / TT01) (Photorhabdus luminescens subsp. laumondii).